We begin with the raw amino-acid sequence, 658 residues long: Threonine--tRNA ligase (658 aa).

The TGS domain maps to 1-63; sequence MDQITITFPD…DDNASIDFVA (63 aa). The segment at 245–548 is catalytic; it reads DHRKLGRELD…LIEHYAGNFP (304 aa). Cys-341, His-392, and His-525 together coordinate Zn(2+).

The protein belongs to the class-II aminoacyl-tRNA synthetase family. As to quaternary structure, homodimer. The cofactor is Zn(2+).

The protein resides in the cytoplasm. The catalysed reaction is tRNA(Thr) + L-threonine + ATP = L-threonyl-tRNA(Thr) + AMP + diphosphate + H(+). Functionally, catalyzes the attachment of threonine to tRNA(Thr) in a two-step reaction: L-threonine is first activated by ATP to form Thr-AMP and then transferred to the acceptor end of tRNA(Thr). Also edits incorrectly charged L-seryl-tRNA(Thr). This is Threonine--tRNA ligase from Rhodopseudomonas palustris (strain ATCC BAA-98 / CGA009).